A 134-amino-acid polypeptide reads, in one-letter code: ATP synthase epsilon chain (134 aa).

Belongs to the ATPase epsilon chain family. F-type ATPases have 2 components, CF(1) - the catalytic core - and CF(0) - the membrane proton channel. CF(1) has five subunits: alpha(3), beta(3), gamma(1), delta(1), epsilon(1). CF(0) has three main subunits: a, b and c.

Its subcellular location is the cell membrane. Functionally, produces ATP from ADP in the presence of a proton gradient across the membrane. The protein is ATP synthase epsilon chain of Ruminiclostridium cellulolyticum (strain ATCC 35319 / DSM 5812 / JCM 6584 / H10) (Clostridium cellulolyticum).